Reading from the N-terminus, the 882-residue chain is DNA mismatch repair protein MutS (882 aa).

629–636 (GPNMGGKS) contributes to the ATP binding site.

Belongs to the DNA mismatch repair MutS family.

This protein is involved in the repair of mismatches in DNA. It is possible that it carries out the mismatch recognition step. This protein has a weak ATPase activity. The sequence is that of DNA mismatch repair protein MutS from Ralstonia pickettii (strain 12J).